The following is a 55-amino-acid chain: Metallothionein-3 (55 aa).

It belongs to the metallothionein superfamily. Type 11 family.

This chain is Metallothionein-3 (MTP3), found in Yarrowia lipolytica (strain CLIB 122 / E 150) (Yeast).